Consider the following 378-residue polypeptide: Decaprenyl-diphosphate synthase subunit 1 (378 aa).

Isopentenyl diphosphate is bound by residues Lys72, Arg75, and His130. The Mg(2+) site is built by Asp137 and Asp141. Isopentenyl diphosphate is bound at residue Arg147.

It belongs to the FPP/GGPP synthase family. In terms of assembly, heterotetramer of 2 dps1 and 2 dlp1 subunits. It depends on Mg(2+) as a cofactor.

It is found in the mitochondrion. It catalyses the reaction 7 isopentenyl diphosphate + (2E,6E)-farnesyl diphosphate = all-trans-decaprenyl diphosphate + 7 diphosphate. Its pathway is cofactor biosynthesis; ubiquinone biosynthesis. In terms of biological role, supplies decaprenyl diphosphate, the precursor for the side chain of the isoprenoid quinones ubiquinone-10. This Schizosaccharomyces pombe (strain 972 / ATCC 24843) (Fission yeast) protein is Decaprenyl-diphosphate synthase subunit 1 (dps1).